Reading from the N-terminus, the 476-residue chain is Glycogen synthase (476 aa).

Residue Lys15 participates in ADP-alpha-D-glucose binding.

Belongs to the glycosyltransferase 1 family. Bacterial/plant glycogen synthase subfamily.

The enzyme catalyses [(1-&gt;4)-alpha-D-glucosyl](n) + ADP-alpha-D-glucose = [(1-&gt;4)-alpha-D-glucosyl](n+1) + ADP + H(+). Its pathway is glycan biosynthesis; glycogen biosynthesis. In terms of biological role, synthesizes alpha-1,4-glucan chains using ADP-glucose. The sequence is that of Glycogen synthase from Leptospira biflexa serovar Patoc (strain Patoc 1 / Ames).